We begin with the raw amino-acid sequence, 315 residues long: Acetaldehyde dehydrogenase 1 (315 aa).

12 to 15 lines the NAD(+) pocket; that stretch reads SGNI. Cys-132 (acyl-thioester intermediate) is an active-site residue. Residues 163 to 171 and Asn-291 contribute to the NAD(+) site; that span reads SAGPGTRAN.

It belongs to the acetaldehyde dehydrogenase family.

The enzyme catalyses acetaldehyde + NAD(+) + CoA = acetyl-CoA + NADH + H(+). In Paraburkholderia phymatum (strain DSM 17167 / CIP 108236 / LMG 21445 / STM815) (Burkholderia phymatum), this protein is Acetaldehyde dehydrogenase 1.